Consider the following 103-residue polypeptide: Large ribosomal subunit protein bL28 (103 aa).

The protein belongs to the bacterial ribosomal protein bL28 family.

This Anaplasma phagocytophilum (strain HZ) protein is Large ribosomal subunit protein bL28.